A 441-amino-acid chain; its full sequence is Tubulin beta chain (441 aa).

8 residues coordinate GTP: Q11, E69, S138, G142, T143, G144, N204, and N226. A Mg(2+)-binding site is contributed by E69.

This sequence belongs to the tubulin family. In terms of assembly, dimer of alpha and beta chains. A typical microtubule is a hollow water-filled tube with an outer diameter of 25 nm and an inner diameter of 15 nM. Alpha-beta heterodimers associate head-to-tail to form protofilaments running lengthwise along the microtubule wall with the beta-tubulin subunit facing the microtubule plus end conferring a structural polarity. Microtubules usually have 13 protofilaments but different protofilament numbers can be found in some organisms and specialized cells. Requires Mg(2+) as cofactor.

The protein resides in the cytoplasm. It localises to the cytoskeleton. Functionally, tubulin is the major constituent of microtubules, a cylinder consisting of laterally associated linear protofilaments composed of alpha- and beta-tubulin heterodimers. Microtubules grow by the addition of GTP-tubulin dimers to the microtubule end, where a stabilizing cap forms. Below the cap, tubulin dimers are in GDP-bound state, owing to GTPase activity of alpha-tubulin. This is Tubulin beta chain from Babesia bovis.